A 350-amino-acid polypeptide reads, in one-letter code: 4-hydroxy-2-oxovalerate aldolase 2 (350 aa).

The Pyruvate carboxyltransferase domain occupies 8–260 (ITVHDMTLRD…ETGVDVFKIQ (253 aa)). Position 16 to 17 (16 to 17 (RD)) interacts with substrate. Residue Asp-17 coordinates Mn(2+). His-20 acts as the Proton acceptor in catalysis. Substrate contacts are provided by Ser-170 and His-199. Mn(2+) is bound by residues His-199 and His-201. Residue Tyr-290 coordinates substrate.

Belongs to the 4-hydroxy-2-oxovalerate aldolase family.

It carries out the reaction (S)-4-hydroxy-2-oxopentanoate = acetaldehyde + pyruvate. The polypeptide is 4-hydroxy-2-oxovalerate aldolase 2 (tesG) (Comamonas testosteroni (Pseudomonas testosteroni)).